We begin with the raw amino-acid sequence, 719 residues long: Leucine-rich repeat and fibronectin type-III domain-containing protein 5 (719 aa).

A signal peptide spans 1-17; sequence MEKILFYLFLIGIAVKA. Positions 18–51 constitute an LRRNT domain; that stretch reads QICPKRCVCQILSPNLATLCAKKGLLFVPPNIDR. At 18-529 the chain is on the extracellular side; sequence QICPKRCVCQ…MQSQFLGGTM (512 aa). LRR repeat units lie at residues 52–73, 76–97, 100–121, 124–145, 148–169, 172–193, and 196–217; these read RTVELRLADNFVTNIKRKDFAN, SLVDLTLSRNTISFITPHAFAD, NLRALHLNSNRLTKITNDMFSG, NLHHLILNNNQLTLISSTAFDD, ALEELDLSYNNLETIPWDAVEK, SLHTLSLDHNMIDNIPKGTFSH, and KMTRLDVTSNKLQKLPPDPLFQ. N-linked (GlcNAc...) asparagine glycosylation is present at Asn-73. The LRRCT domain maps to 240 to 286; sequence NPLHCNCELLWLRRLSREDDLETCASPPLLTGRYFWSIPEEEFLCEP. Residues 287–373 enclose the Ig-like domain; that stretch reads PLITRHTHEM…GEATQIVDLH (87 aa). Cys-308 and Cys-357 are disulfide-bonded. Asn-330, Asn-339, Asn-382, Asn-406, and Asn-452 each carry an N-linked (GlcNAc...) asparagine glycan. The tract at residues 385–414 is disordered; that stretch reads NHIHEPDPGSSDISTSTKSGSNTSSSNGDT. Over residues 393 to 414 the composition is skewed to low complexity; sequence GSSDISTSTKSGSNTSSSNGDT. Residues 414-503 enclose the Fibronectin type-III domain; that stretch reads TKLSQDKIVV…ITSLTATRVV (90 aa). A helical transmembrane segment spans residues 530-550; sequence IIIIGGIIVASVLVFIIILMI. Over 551–719 the chain is Cytoplasmic; sequence RYKVCNNNGQ…VQETQRLELI (169 aa). Residues 615–627 are compositionally biased toward low complexity; it reads ETCSSQDSSTTTS. Positions 615-694 are disordered; the sequence is ETCSSQDSST…SVTEGPTSKR (80 aa). 2 stretches are compositionally biased toward polar residues: residues 628–641 and 649–677; these read ALPPSWTSSTSVSQ and TKPSTEPQNEAVTNVESQNTNRNNSTALQ.

This sequence belongs to the LRFN family. In terms of assembly, can form heteromeric complexes with LRFN1, LRFN2, LRFN3 and LFRN4. Able to form homomeric complexes across cell junctions, between adjacent cells. Does not interact with DLG1, DLG2, DLG3 and DLG4.

It localises to the membrane. Its function is as follows. Cell adhesion molecule that mediates homophilic cell-cell adhesion in a Ca(2+)-independent manner. Promotes neurite outgrowth in hippocampal neurons. The protein is Leucine-rich repeat and fibronectin type-III domain-containing protein 5 (LRFN5) of Homo sapiens (Human).